Reading from the N-terminus, the 691-residue chain is Calcium-binding and coiled-coil domain-containing protein 1 (691 aa).

Residues 1–30 (MEESPLSRAPSRGGVNFLNVARTYIPNTKV) are p300 KIX-binding. The N-terminal AD (CTNNB1 binding site) stretch occupies residues 1-190 (MEESPLSRAP…VQELERALAT (190 aa)). Position 4 is a phosphoserine (S4). Residues 45–125 (SDWIGIFKVE…FQFREPRPMD (81 aa)) are interaction with GATA1. Coiled coils occupy residues 145–205 (KATV…YKGI), 232–339 (ELED…AELE), and 417–514 (QSVE…ADEK). Residues 501 to 691 (RKLEARLEKV…FSTQDPFTFE (191 aa)) are C-terminal AD (CTNNB1 binding site); interaction with CCAR1. The segment at 514–606 (KWNEDATTED…SEAEDEKSVL (93 aa)) is disordered. Residues 653-679 (WKECPICKERFPAESDKDALEDHMDGH) form a UBZ1-type zinc finger. Zn(2+) is bound by residues C656, C659, H675, and H679.

The protein belongs to the CALCOCO family. In terms of assembly, part of a calphoglin complex consisting of CALCOCO1, PPA1 and PGM. Interacts with the bHLH-PAS domains of GRIP1, AHR and ARNT. Interacts with CTNNB1 via both its N- and C-terminal regions. Interacts with EP300. Interacts with CCAR1 (via N-terminus) and GATA1.

Its subcellular location is the cytoplasm. It localises to the nucleus. In terms of biological role, functions as a coactivator for aryl hydrocarbon and nuclear receptors (NR). Recruited to promoters through its contact with the N-terminal basic helix-loop-helix-Per-Arnt-Sim (PAS) domain of transcription factors or coactivators, such as NCOA2. During ER-activation acts synergistically in combination with other NCOA2-binding proteins, such as EP300, CREBBP and CARM1. Involved in the transcriptional activation of target genes in the Wnt/CTNNB1 pathway. Functions as a secondary coactivator in LEF1-mediated transcriptional activation via its interaction with CTNNB1. Coactivator function for nuclear receptors and LEF1/CTNNB1 involves differential utilization of two different activation regions. In association with CCAR1 enhances GATA1- and MED1-mediated transcriptional activation from the gamma-globin promoter during erythroid differentiation of K562 erythroleukemia cells. Functionally, seems to enhance inorganic pyrophosphatase thus activating phosphogluomutase (PMG). Probably functions as a component of the calphoglin complex, which is involved in linking cellular metabolism (phosphate and glucose metabolism) with other core functions including protein synthesis and degradation, calcium signaling and cell growth. The protein is Calcium-binding and coiled-coil domain-containing protein 1 (CALCOCO1) of Homo sapiens (Human).